The primary structure comprises 256 residues: Protein FixA (256 aa).

Belongs to the ETF beta-subunit/FixA family. In terms of assembly, heterodimer of FixA and FixB.

It functions in the pathway amine and polyamine metabolism; carnitine metabolism. Functionally, required for anaerobic carnitine reduction. May bring reductant to CaiA. The sequence is that of Protein FixA from Shigella flexneri serotype 5b (strain 8401).